A 131-amino-acid polypeptide reads, in one-letter code: Large ribosomal subunit protein bL21 (131 aa).

Belongs to the bacterial ribosomal protein bL21 family. As to quaternary structure, part of the 50S ribosomal subunit. Contacts protein L20.

This protein binds to 23S rRNA in the presence of protein L20. In Cereibacter sphaeroides (strain ATCC 17023 / DSM 158 / JCM 6121 / CCUG 31486 / LMG 2827 / NBRC 12203 / NCIMB 8253 / ATH 2.4.1.) (Rhodobacter sphaeroides), this protein is Large ribosomal subunit protein bL21.